The chain runs to 385 residues: S-adenosylmethionine synthase (385 aa).

ATP is bound at residue H14. Position 16 (D16) interacts with Mg(2+). E42 contributes to the K(+) binding site. Residues E55 and Q98 each contribute to the L-methionine site. A flexible loop region spans residues 98–108 (QSGDIAQAVDN). ATP contacts are provided by residues 165-167 (DAK), 232-233 (RF), D241, 247-248 (RK), A264, and K268. D241 lines the L-methionine pocket. K272 contacts L-methionine.

The protein belongs to the AdoMet synthase family. Homotetramer; dimer of dimers. The cofactor is Mg(2+). K(+) serves as cofactor.

It localises to the cytoplasm. The enzyme catalyses L-methionine + ATP + H2O = S-adenosyl-L-methionine + phosphate + diphosphate. Its pathway is amino-acid biosynthesis; S-adenosyl-L-methionine biosynthesis; S-adenosyl-L-methionine from L-methionine: step 1/1. Functionally, catalyzes the formation of S-adenosylmethionine (AdoMet) from methionine and ATP. The overall synthetic reaction is composed of two sequential steps, AdoMet formation and the subsequent tripolyphosphate hydrolysis which occurs prior to release of AdoMet from the enzyme. The sequence is that of S-adenosylmethionine synthase from Leuconostoc mesenteroides subsp. mesenteroides (strain ATCC 8293 / DSM 20343 / BCRC 11652 / CCM 1803 / JCM 6124 / NCDO 523 / NBRC 100496 / NCIMB 8023 / NCTC 12954 / NRRL B-1118 / 37Y).